A 66-amino-acid chain; its full sequence is Large ribosomal subunit protein uL29 (66 aa).

It belongs to the universal ribosomal protein uL29 family.

The sequence is that of Large ribosomal subunit protein uL29 from Bartonella henselae (strain ATCC 49882 / DSM 28221 / CCUG 30454 / Houston 1) (Rochalimaea henselae).